The following is a 906-amino-acid chain: Ankyrin repeat and MYND domain-containing protein 1 (906 aa).

3 MORN repeats span residues 16 to 38 (YHGQ…DGSS), 39 to 59 (FTGT…TKTM), and 61 to 83 (FQGL…DGSQ). The ANK 1 repeat unit spans residues 282–311 (KGYTVLAAAAMHSHLDIVNLLLDFGADVNK). Residues 391–400 (SMQTPESSNM) show a composition bias toward polar residues. The disordered stretch occupies residues 391–411 (SMQTPESSNMLHKEEVSPVKT). ANK repeat units follow at residues 479–508 (VRKM…DPNL), 511–540 (VPMQ…QTDI), 547–579 (QSLT…NVDA), 623–657 (GGRT…NPNV), 660–689 (SGHS…DPNL), and 701–732 (VVCD…DVLN). The Zn(2+) site is built by cysteine 845, cysteine 848, cysteine 859, cysteine 862, cysteine 868, cysteine 872, histidine 881, and cysteine 885. The MYND-type zinc finger occupies 845–885 (CYQCGRSIGVRLSPCPRCYGILTCSKYCKTKAWIEFHKKDC).

The sequence is that of Ankyrin repeat and MYND domain-containing protein 1 (Ankmy1) from Mus musculus (Mouse).